Here is a 402-residue protein sequence, read N- to C-terminus: Plasminogen activator inhibitor 1 (402 aa).

The first 23 residues, 1 to 23 (MQMSPALTCLVLGLALVFGEGSA), serve as a signal peptide directing secretion. N-linked (GlcNAc...) asparagine glycosylation is found at Asn-232, Asn-288, and Asn-352.

It belongs to the serpin family. In terms of assembly, forms a heterodimer with TMPRSS7. Interacts with VTN. Binds LRP1B; binding is followed by internalization and degradation. Interacts with PPP1CB. In complex with PLAU/uPA, interacts with PLAUR/uPAR. Interacts with SORL1 and LRP1, either alone or in complex with PLAU; these interactions are abolished in the presence of LRPAP1/RAP. The ternary complex composed of PLAUR-PLAU-PAI1 also interacts with SORL1. Interacts with PLAT/tPA. Also interacts with SORL1, when complexed to PLAT/tPA. Post-translationally, inactivated by proteolytic attack of the urokinase-type (u-PA) and the tissue-type (TPA), cleaving the 369-Arg-|-Met-370 bond. As to expression, expressed in endothelial cells. Found in plasma, platelets, and hepatoma and fibrosarcoma cells.

It localises to the secreted. Functionally, serine protease inhibitor. Inhibits TMPRSS7. Is a primary inhibitor of tissue-type plasminogen activator (PLAT) and urokinase-type plasminogen activator (PLAU). As PLAT inhibitor, it is required for fibrinolysis down-regulation and is responsible for the controlled degradation of blood clots. As PLAU inhibitor, it is involved in the regulation of cell adhesion and spreading. Acts as a regulator of cell migration, independently of its role as protease inhibitor. It is required for stimulation of keratinocyte migration during cutaneous injury repair. It is involved in cellular and replicative senescence. Plays a role in alveolar type 2 cells senescence in the lung. Is involved in the regulation of cementogenic differentiation of periodontal ligament stem cells, and regulates odontoblast differentiation and dentin formation during odontogenesis. The sequence is that of Plasminogen activator inhibitor 1 (SERPINE1) from Homo sapiens (Human).